We begin with the raw amino-acid sequence, 348 residues long: NAC domain-containing protein 101 (348 aa).

One can recognise an NAC domain in the interval 7–156 (IPPGYRFHPT…GWVVCRAFKK (150 aa)). A DNA-binding region spans residues 107 to 162 (VGMRKTLVFYKGRAPNGQKSDWIMHEYRLETDENGPPHEEGWVVCRAFKKKLTTMN). Residues 325–348 (MVSMNASSSSSPCSFYSWAQNTHT) form a disordered region. Positions 327 to 341 (SMNASSSSSPCSFYS) are enriched in low complexity.

This sequence belongs to the plant vascular related NAC-domain protein family. Homodimer. As to expression, expressed in root inner metaxylem vessels and in hypocotyl vessels. Present in root developing xylems. Accumulates in the xylem but not in interfascicular fibers or pith cells in inflorescence stems. Absent from secondary xylem in roots.

It is found in the nucleus. In terms of biological role, transcription activator that binds to the secondary wall NAC binding element (SNBE), 5'-(T/A)NN(C/T)(T/C/G)TNNNNNNNA(A/C)GN(A/C/T)(A/T)-3', and to the tracheary elements (TE) specific regulating cis-element (TERE), 5'-CTTNAAAGCNA-3', in the promoter of target genes (e.g. genes involved in secondary wall biosynthesis, cell wall modification such as xylan accumulation, and programmed cell death). Involved in xylem formation in roots and shoots, especially regulating metaxylem vessel differentiation by promoting immature xylem vessel-specific genes expression, especially genes regulating programmed cell death (PCD) and secondary wall formation in tracheary elements (TE). Can activate MYB25, MYB46, MYB58, MYB63, MYB83, MYB103, CESA4, LBD15, LBD30, ERF115, XCP1, XCP2, NAC010/SND3, KNAT7, ASL19 and ASL20 expression. This chain is NAC domain-containing protein 101, found in Arabidopsis thaliana (Mouse-ear cress).